Consider the following 38-residue polypeptide: Large ribosomal subunit protein bL36 (38 aa).

Belongs to the bacterial ribosomal protein bL36 family.

The protein is Large ribosomal subunit protein bL36 of Enterococcus faecalis (strain ATCC 700802 / V583).